The sequence spans 110 residues: Large ribosomal subunit protein uL22 (110 aa).

It belongs to the universal ribosomal protein uL22 family. In terms of assembly, part of the 50S ribosomal subunit.

This protein binds specifically to 23S rRNA; its binding is stimulated by other ribosomal proteins, e.g. L4, L17, and L20. It is important during the early stages of 50S assembly. It makes multiple contacts with different domains of the 23S rRNA in the assembled 50S subunit and ribosome. Functionally, the globular domain of the protein is located near the polypeptide exit tunnel on the outside of the subunit, while an extended beta-hairpin is found that lines the wall of the exit tunnel in the center of the 70S ribosome. This Acinetobacter baylyi (strain ATCC 33305 / BD413 / ADP1) protein is Large ribosomal subunit protein uL22.